Here is an 870-residue protein sequence, read N- to C-terminus: MGLRTSSGSPLVKPKLYKTSASNVISLAEKQDRFLNLGELTDLNTYFSSGNRRLDIAKVISLNANLIISRAADRIFVGGSPLSFLERPQAAVTLTSDQASSTSIQSTKGLGNGNIFQNFFKSTSEAPTGFKPINVVRYGSSNMKKSIRDLDWFLRYVTYAIVAGDTSILIVNTKGLRELIDKACSSSAAIVALKEMKNVSLSLFNYDIESQNIVRLYFNTLVSEFESPASSSKVRKRNSLDLQGLAIPDIYLVAADKSLRYVMKPNLSNTEKAQVIKACYRQVFERDIAKAYGLSLLELESKLKNLQISVKEFIRALGKSTLYRKNFYEGFTNSRVVELAFRHFMGRGLSSLQEFRKYFAILSSNGLDALIDSIINNSEYAEYFGEETVPYIRGYGQEAQECRNWGSQFALFKYSAPFRTIPQFITLFADYTQLPPSQHCYGKLNDPLNIQFGAIFKNSYVNEQSRPVLFPRGSRRILVYKGAGIFNQLGSPNALEKPPSNVSIAKWSKETDLNFILNAAYLRVFGRYVYEEEKIALRPLENEFKRRSISVRDFVGQLAKSDVFRSLYWSRLYICKSIEYIHIRLLGRPTYGRTEINNYFDIVYKSGFYAFVDSLVNSREYIKCFGNDTVPYDRYSTPEAVSSSIFRLSFINSVSYKSLKPKIEKFIQLGVARDAKSLSSLNSKVFQGVSQARSQKRVFKVSDYSNVMNLRIVFYAALRQVFERNIEPYIKGGEFKDIESLFLSGKISVRELIKEIGSSSLYRKEFYIPFPNTQVIEFCTKHFLGRAPKNQSEIRYYNQVLAVQGLREMINYMINSKEYLSVFGDDIVPYRRFPTLPAANFPNTQRLYSRQTKQNRNIVVPSFSGLLNTV.

C184 lines the (2R,3E)-phycocyanobilin pocket. PBS-linker domains are found at residues 241 to 421, 482 to 665, and 679 to 856; these read DLQG…FRTI, GAGI…KIEK, and SSLN…KQNR.

Belongs to the phycobilisome linker protein family. In terms of processing, contains one covalently linked bilin chromophore. This protein autochromophorylates (Potential).

Its subcellular location is the plastid. The protein localises to the chloroplast thylakoid membrane. Functionally, this protein is postulated to act both as terminal energy acceptor and as a linker polypeptide that stabilizes the phycobilisome architecture. May have intrinsic bilin lyase activity. This is Phycobiliprotein ApcE (apcE) from Cyanidium caldarium (Red alga).